Consider the following 1615-residue polypeptide: DNA-directed RNA polymerase I subunit rpa1 (1615 aa).

Residues C65, C68, C75, and H78 each coordinate Zn(2+). Positions G155–K181 are disordered. Acidic residues predominate over residues E160–D171. Residues S172–K181 are compositionally biased toward basic and acidic residues. Positions 593, 595, and 597 each coordinate Mg(2+). The bridging helix stretch occupies residues P955–E967. Residues D1305 to A1316 show a composition bias toward acidic residues. Residues D1305 to D1411 are disordered. Positions N1317–N1336 are enriched in low complexity. Over residues E1366 to E1399 the composition is skewed to acidic residues. Residues I1400–D1411 show a composition bias toward low complexity.

It belongs to the RNA polymerase beta' chain family. Component of the RNA polymerase I (Pol I) complex consisting of at least 13 subunits.

The protein localises to the nucleus. The catalysed reaction is RNA(n) + a ribonucleoside 5'-triphosphate = RNA(n+1) + diphosphate. DNA-dependent RNA polymerase catalyzes the transcription of DNA into RNA using the four ribonucleoside triphosphates as substrates. Largest and catalytic core component of RNA polymerase I which synthesizes ribosomal RNA precursors. Forms the polymerase active center together with the second largest subunit. A single stranded DNA template strand of the promoter is positioned within the central active site cleft of Pol I. A bridging helix emanates from RPA1 and crosses the cleft near the catalytic site and is thought to promote translocation of Pol I by acting as a ratchet that moves the RNA-DNA hybrid through the active site by switching from straight to bent conformations at each step of nucleotide addition. The polypeptide is DNA-directed RNA polymerase I subunit rpa1 (polr1a) (Dictyostelium discoideum (Social amoeba)).